The primary structure comprises 327 residues: Ribose-phosphate pyrophosphokinase (327 aa).

ATP-binding positions include 40 to 42 (DGE) and 99 to 100 (RQ). Residues histidine 134 and aspartate 173 each coordinate Mg(2+). The active site involves lysine 196. D-ribose 5-phosphate contacts are provided by residues arginine 198, aspartate 222, and 226–230 (DTANT).

The protein belongs to the ribose-phosphate pyrophosphokinase family. Class I subfamily. In terms of assembly, homohexamer. The cofactor is Mg(2+).

It is found in the cytoplasm. It catalyses the reaction D-ribose 5-phosphate + ATP = 5-phospho-alpha-D-ribose 1-diphosphate + AMP + H(+). It participates in metabolic intermediate biosynthesis; 5-phospho-alpha-D-ribose 1-diphosphate biosynthesis; 5-phospho-alpha-D-ribose 1-diphosphate from D-ribose 5-phosphate (route I): step 1/1. Functionally, involved in the biosynthesis of the central metabolite phospho-alpha-D-ribosyl-1-pyrophosphate (PRPP) via the transfer of pyrophosphoryl group from ATP to 1-hydroxyl of ribose-5-phosphate (Rib-5-P). The chain is Ribose-phosphate pyrophosphokinase from Neisseria meningitidis serogroup A / serotype 4A (strain DSM 15465 / Z2491).